The following is a 428-amino-acid chain: Elongation factor 1-alpha (428 aa).

The 213-residue stretch at 5 to 217 (KPHVNIVFIG…DQIPEPEKPV (213 aa)) folds into the tr-type G domain. Residues 14–21 (GHVDHGKS) are G1. 14-21 (GHVDHGKS) contributes to the GTP binding site. S21 provides a ligand contact to Mg(2+). Positions 68-72 (GITID) are G2. The G3 stretch occupies residues 89–92 (DAPG). GTP is bound by residues 89–93 (DAPGH) and 144–147 (NKMD). Positions 144–147 (NKMD) are G4. The tract at residues 181-183 (SAW) is G5.

Belongs to the TRAFAC class translation factor GTPase superfamily. Classic translation factor GTPase family. EF-Tu/EF-1A subfamily.

It localises to the cytoplasm. It catalyses the reaction GTP + H2O = GDP + phosphate + H(+). Functionally, GTP hydrolase that promotes the GTP-dependent binding of aminoacyl-tRNA to the A-site of ribosomes during protein biosynthesis. The sequence is that of Elongation factor 1-alpha from Pyrococcus furiosus (strain ATCC 43587 / DSM 3638 / JCM 8422 / Vc1).